We begin with the raw amino-acid sequence, 291 residues long: Formamidopyrimidine-DNA glycosylase (291 aa).

P2 serves as the catalytic Schiff-base intermediate with DNA. The active-site Proton donor is the E3. K58 serves as the catalytic Proton donor; for beta-elimination activity. DNA contacts are provided by H100, R123, and K166. The FPG-type zinc-finger motif lies at 257–291; the sequence is SVYGREGKECFQCGIPITRISQSGRSSFYCSQCQK. The active-site Proton donor; for delta-elimination activity is R281.

It belongs to the FPG family. In terms of assembly, monomer. Requires Zn(2+) as cofactor.

The enzyme catalyses Hydrolysis of DNA containing ring-opened 7-methylguanine residues, releasing 2,6-diamino-4-hydroxy-5-(N-methyl)formamidopyrimidine.. It carries out the reaction 2'-deoxyribonucleotide-(2'-deoxyribose 5'-phosphate)-2'-deoxyribonucleotide-DNA = a 3'-end 2'-deoxyribonucleotide-(2,3-dehydro-2,3-deoxyribose 5'-phosphate)-DNA + a 5'-end 5'-phospho-2'-deoxyribonucleoside-DNA + H(+). Its function is as follows. Involved in base excision repair of DNA damaged by oxidation or by mutagenic agents. Acts as a DNA glycosylase that recognizes and removes damaged bases. Has a preference for oxidized purines, such as 7,8-dihydro-8-oxoguanine (8-oxoG). Has AP (apurinic/apyrimidinic) lyase activity and introduces nicks in the DNA strand. Cleaves the DNA backbone by beta-delta elimination to generate a single-strand break at the site of the removed base with both 3'- and 5'-phosphates. This is Formamidopyrimidine-DNA glycosylase from Bartonella quintana (strain Toulouse) (Rochalimaea quintana).